We begin with the raw amino-acid sequence, 398 residues long: Succinate--CoA ligase [ADP-forming] subunit beta (398 aa).

The 246-residue stretch at 9–254 (KALLHEFGVP…ETEEDAKEIE (246 aa)) folds into the ATP-grasp domain. ATP-binding positions include K46, 53–55 (GRG), E109, S112, and E117. Mg(2+)-binding residues include N209 and D223. Residues N274 and 331-333 (GIM) contribute to the substrate site.

It belongs to the succinate/malate CoA ligase beta subunit family. Heterotetramer of two alpha and two beta subunits. It depends on Mg(2+) as a cofactor.

The enzyme catalyses succinate + ATP + CoA = succinyl-CoA + ADP + phosphate. It carries out the reaction GTP + succinate + CoA = succinyl-CoA + GDP + phosphate. The protein operates within carbohydrate metabolism; tricarboxylic acid cycle; succinate from succinyl-CoA (ligase route): step 1/1. Functionally, succinyl-CoA synthetase functions in the citric acid cycle (TCA), coupling the hydrolysis of succinyl-CoA to the synthesis of either ATP or GTP and thus represents the only step of substrate-level phosphorylation in the TCA. The beta subunit provides nucleotide specificity of the enzyme and binds the substrate succinate, while the binding sites for coenzyme A and phosphate are found in the alpha subunit. The protein is Succinate--CoA ligase [ADP-forming] subunit beta of Bradyrhizobium sp. (strain BTAi1 / ATCC BAA-1182).